Reading from the N-terminus, the 290-residue chain is 2-phosphoglycerate kinase (290 aa).

The ATP-cone domain maps to 1 to 89 (MIIVTDSERK…FWRELRRRKV (89 aa)).

It belongs to the 2-phosphoglycerate kinase family. The cofactor is a divalent metal cation.

It carries out the reaction (2R)-2-phosphoglycerate + ATP = (2R)-2,3-bisphosphoglycerate + ADP + H(+). It participates in thermoadapter biosynthesis; cyclic 2,3-diphosphoglycerate biosynthesis; cyclic 2,3-diphosphoglycerate from 2-phospho-D-glycerate: step 1/2. Its function is as follows. Catalyzes the phosphorylation of 2-phosphoglycerate to 2,3-diphosphoglycerate. Involved in the biosynthesis of cyclic 2,3-bisphosphoglycerate, a thermoprotectant. In Thermococcus kodakarensis (strain ATCC BAA-918 / JCM 12380 / KOD1) (Pyrococcus kodakaraensis (strain KOD1)), this protein is 2-phosphoglycerate kinase.